The following is a 392-amino-acid chain: Dual-specificity RNA methyltransferase RlmN (392 aa).

Residue Glu116 is the Proton acceptor of the active site. The 243-residue stretch at 122–364 (EEGRGTLCVS…SPIRTPRGED (243 aa)) folds into the Radical SAM core domain. A disulfide bond links Cys129 and Cys369. Residues Cys136, Cys140, and Cys143 each contribute to the [4Fe-4S] cluster site. Residues 195–196 (GE), Ser227, 249–251 (SFH), and Asn326 contribute to the S-adenosyl-L-methionine site. The active-site S-methylcysteine intermediate is Cys369.

Belongs to the radical SAM superfamily. RlmN family. The cofactor is [4Fe-4S] cluster.

Its subcellular location is the cytoplasm. It carries out the reaction adenosine(2503) in 23S rRNA + 2 reduced [2Fe-2S]-[ferredoxin] + 2 S-adenosyl-L-methionine = 2-methyladenosine(2503) in 23S rRNA + 5'-deoxyadenosine + L-methionine + 2 oxidized [2Fe-2S]-[ferredoxin] + S-adenosyl-L-homocysteine. It catalyses the reaction adenosine(37) in tRNA + 2 reduced [2Fe-2S]-[ferredoxin] + 2 S-adenosyl-L-methionine = 2-methyladenosine(37) in tRNA + 5'-deoxyadenosine + L-methionine + 2 oxidized [2Fe-2S]-[ferredoxin] + S-adenosyl-L-homocysteine. In terms of biological role, specifically methylates position 2 of adenine 2503 in 23S rRNA and position 2 of adenine 37 in tRNAs. m2A2503 modification seems to play a crucial role in the proofreading step occurring at the peptidyl transferase center and thus would serve to optimize ribosomal fidelity. This chain is Dual-specificity RNA methyltransferase RlmN, found in Cereibacter sphaeroides (strain ATCC 17025 / ATH 2.4.3) (Rhodobacter sphaeroides).